We begin with the raw amino-acid sequence, 533 residues long: Nitrogen fixation protein AnfA (533 aa).

The a domain stretch occupies residues 33–193; that stretch reads ILYKISQIIT…PLVELYLIEN (161 aa). The region spanning 46–186 is the GAF domain; the sequence is DLADALSIVL…MIATMIAPLV (141 aa). In terms of domain architecture, Sigma-54 factor interaction spans 219–448; it reads IIGNSKPMQE…LENVMERAVI (230 aa). ATP is bound by residues 247-254 and 310-319; these read GESGVGKE and ADGGTIFLDE. The H-T-H motif DNA-binding region spans 501–520; it reads IGEAAKELGLARRMLGVRME.

Its function is as follows. AnfA is essential for nitrogen fixation under Mo- and V-deficient conditions. It is required for the regulation of nitrogenase 3 transcription. Interacts with sigma-54. The chain is Nitrogen fixation protein AnfA (anfA) from Azotobacter vinelandii.